We begin with the raw amino-acid sequence, 456 residues long: Methylenetetrahydrofolate--tRNA-(uracil-5-)-methyltransferase TrmFO (456 aa).

FAD is bound at residue 11 to 16 (GAGLAG).

The protein belongs to the MnmG family. TrmFO subfamily. Requires FAD as cofactor.

Its subcellular location is the cytoplasm. It carries out the reaction uridine(54) in tRNA + (6R)-5,10-methylene-5,6,7,8-tetrahydrofolate + NADH + H(+) = 5-methyluridine(54) in tRNA + (6S)-5,6,7,8-tetrahydrofolate + NAD(+). The enzyme catalyses uridine(54) in tRNA + (6R)-5,10-methylene-5,6,7,8-tetrahydrofolate + NADPH + H(+) = 5-methyluridine(54) in tRNA + (6S)-5,6,7,8-tetrahydrofolate + NADP(+). In terms of biological role, catalyzes the folate-dependent formation of 5-methyl-uridine at position 54 (M-5-U54) in all tRNAs. The protein is Methylenetetrahydrofolate--tRNA-(uracil-5-)-methyltransferase TrmFO of Synechococcus sp. (strain CC9605).